Consider the following 151-residue polypeptide: Transcriptional regulator MraZ (151 aa).

SpoVT-AbrB domains lie at 5 to 51 (AHEL…PVAE) and 81 to 124 (AEIL…GREQ).

The protein belongs to the MraZ family. As to quaternary structure, forms oligomers.

It is found in the cytoplasm. The protein resides in the nucleoid. The polypeptide is Transcriptional regulator MraZ (Neisseria meningitidis serogroup C / serotype 2a (strain ATCC 700532 / DSM 15464 / FAM18)).